The chain runs to 234 residues: Cysteine proteinase inhibitor 6 (234 aa).

The signal sequence occupies residues 1 to 24 (MMRSRFLLFIVFFSLSLFISSLIA). Methionine 2 is modified (N-acetylalanine). Cystatin domains lie at 38–126 (GGVG…KPAS) and 145–215 (SGWR…FKVE). A Secondary area of contact motif is present at residues 82 to 86 (QVVAG). The disordered stretch occupies residues 133–154 (SSDLGCKQGEHESGWREVPGDD). Over residues 140-154 (QGEHESGWREVPGDD) the composition is skewed to basic and acidic residues. At serine 174 the chain carries Phosphoserine.

This sequence belongs to the cystatin family. Phytocystatin subfamily.

Its subcellular location is the secreted. Its function is as follows. Specific inhibitor of cysteine proteinases. Probably involved in the regulation of endogenous processes and in defense against pests and pathogens. The chain is Cysteine proteinase inhibitor 6 (CYS6) from Arabidopsis thaliana (Mouse-ear cress).